A 315-amino-acid chain; its full sequence is Glutathione synthetase (315 aa).

The ATP-grasp domain occupies 125–310 (KLFTAWFSDL…ITGMLMDAIE (186 aa)). An ATP-binding site is contributed by 151–207 (WEKHSDIILKPLDGMGGASIFRVKEGDPNLGVIAETLTEHGTRYCMAQNYLPAIKDG). Residues E281 and N283 each contribute to the Mg(2+) site.

This sequence belongs to the prokaryotic GSH synthase family. Mg(2+) is required as a cofactor. It depends on Mn(2+) as a cofactor.

It catalyses the reaction gamma-L-glutamyl-L-cysteine + glycine + ATP = glutathione + ADP + phosphate + H(+). The protein operates within sulfur metabolism; glutathione biosynthesis; glutathione from L-cysteine and L-glutamate: step 2/2. The chain is Glutathione synthetase from Escherichia coli O157:H7.